Here is a 115-residue protein sequence, read N- to C-terminus: T cell receptor delta variable 2 (115 aa).

The signal sequence occupies residues 1–19 (MQRISSLIHLSLFWAGVMS). The 91-residue stretch at 25-115 (PEHQTVPVSI…EGSYYCACDT (91 aa)) folds into the Ig-like domain. A disulfide bridge links Cys-42 with Cys-111.

As to quaternary structure, gamma-delta TR is a heterodimer composed of a gamma and delta chain; disulfide-linked. The gamma-delta TR is associated with the transmembrane signaling CD3 coreceptor proteins following the stoichiometry: a single gamma-delta TR heterodimer associates with one CD3D-CD3E heterodimer, one CD3G-CD3E heterodimer and one CD247 homodimer forming a stable octameric structure. Upon activation, gamma-delta TR complex associates with FCER1G to initiate intracellular signaling.

The protein resides in the cell membrane. In terms of biological role, v region of the variable domain of T cell receptor (TR) delta chain that participates in the antigen recognition. Gamma-delta TRs recognize a variety of self and foreign non-peptide antigens frequently expressed at the epithelial boundaries between the host and external environment, including endogenous lipids presented by MH-like protein CD1D and phosphoantigens presented by butyrophilin-like molecule BTN3A1. Upon antigen recognition induces rapid, innate-like immune responses involved in pathogen clearance and tissue repair. Binding of gamma-delta TR complex to antigen triggers phosphorylation of immunoreceptor tyrosine-based activation motifs (ITAMs) in the CD3 chains by the LCK and FYN kinases, allowing the recruitment, phosphorylation, and activation of ZAP70 that facilitates phosphorylation of the scaffolding proteins LCP2 and LAT. This lead to the formation of a supramolecular signalosome that recruits the phospholipase PLCG1, resulting in calcium mobilization and ERK activation, ultimately leading to T cell expansion and differentiation into effector cells. Gamma-delta TRs are produced through somatic rearrangement of a limited repertoire of variable (V), diversity (D), and joining (J) genes. The potential diversity of gamma-delta TRs is conferred by the unique ability to rearrange (D) genes in tandem and to utilize all three reading frames. The combinatorial diversity is considerably increased by the sequence exonuclease trimming and random nucleotide (N) region additions which occur during the V-(D)-J rearrangements. In Homo sapiens (Human), this protein is T cell receptor delta variable 2.